Here is a 355-residue protein sequence, read N- to C-terminus: N-acetyl-gamma-glutamyl-phosphate reductase (355 aa).

The active site involves Cys-152.

It belongs to the NAGSA dehydrogenase family. Type 1 subfamily.

It localises to the cytoplasm. It catalyses the reaction N-acetyl-L-glutamate 5-semialdehyde + phosphate + NADP(+) = N-acetyl-L-glutamyl 5-phosphate + NADPH + H(+). Its pathway is amino-acid biosynthesis; L-arginine biosynthesis; N(2)-acetyl-L-ornithine from L-glutamate: step 3/4. In terms of biological role, catalyzes the NADPH-dependent reduction of N-acetyl-5-glutamyl phosphate to yield N-acetyl-L-glutamate 5-semialdehyde. The sequence is that of N-acetyl-gamma-glutamyl-phosphate reductase from Psychrobacter arcticus (strain DSM 17307 / VKM B-2377 / 273-4).